Reading from the N-terminus, the 103-residue chain is UPF0145 protein BCE33L0904 (103 aa).

Belongs to the UPF0145 family.

The polypeptide is UPF0145 protein BCE33L0904 (Bacillus cereus (strain ZK / E33L)).